A 350-amino-acid polypeptide reads, in one-letter code: Variable large protein 4 (350 aa).

A signal peptide spans 1–18 (MRRRISAIIMTLFMVLVS). A lipid anchor (N-palmitoyl cysteine) is attached at cysteine 19. A lipid anchor (S-diacylglycerol cysteine) is attached at cysteine 19.

This sequence belongs to the variable large protein (Vlp) family. Delta subfamily.

Its subcellular location is the cell outer membrane. Its function is as follows. The Vlp and Vsp proteins are antigenically distinct proteins, only one vlp or vsp gene is transcriptionally active at any one time. Switching between these genes is a mechanism of host immune response evasion. The protein is Variable large protein 4 of Borrelia hermsii.